A 320-amino-acid polypeptide reads, in one-letter code: Olfactory receptor 51E2 (320 aa).

Residues 1–24 (MSSCNFTHATFMLIGIPGLEEAHF) are Extracellular-facing. N-linked (GlcNAc...) asparagine glycosylation is present at Asn-5. The helical transmembrane segment at 25–45 (WFGFPLLSMYAVALFGNCIVV) threads the bilayer. Residues 46–53 (FIVRTERS) lie on the Cytoplasmic side of the membrane. A helical membrane pass occupies residues 54-74 (LHAPMYLFLCMLAAIDLALST). Topologically, residues 75–98 (STMPKILALFWFDSREITFDACLA) are extracellular. An intrachain disulfide couples Cys-96 to Cys-178. The helical transmembrane segment at 99–119 (QMFFIHALSAIESTILLAMAF) threads the bilayer. The Cytoplasmic segment spans residues 120-138 (DRYVAICHPLRHAAVLNNT). The helical transmembrane segment at 139-159 (VTVQIGMVALVRGSLFFFPLP) threads the bilayer. Over 160–195 (LLIKRLAFCHSNVLSHSYCVHQDVMKLAYTDTLPNV) the chain is Extracellular. Residues 196 to 216 (VYGLTAILLVMGVDVMFISLS) traverse the membrane as a helical segment. The Cytoplasmic segment spans residues 217 to 236 (YFLIIRAVLQLPSKSERAKA). The chain crosses the membrane as a helical span at residues 237-257 (FGTCVSHIGVVLAFYVPLIGL). Topologically, residues 258 to 272 (SVVHRFGNSLDPIVH) are extracellular. The helical transmembrane segment at 273-293 (VLMGDVYLLLPPVINPIIYGA) threads the bilayer. Topologically, residues 294–320 (KTKQIRTRVLAMFKISCDKDIEAGGNT) are cytoplasmic.

It belongs to the G-protein coupled receptor 1 family. As to expression, expressed in brain and liver. Expressed only in some areas of the brain and in the olfactory epithelium.

It is found in the cell membrane. The protein resides in the early endosome membrane. Olfactory receptor. The activity of this receptor is probably mediated by G-proteins which induce elevation of intracellular Ca(2+), cAMP and activation of phosphorylation of the protein kinases PKA and MAPK3/MAPK1. Activation of OR51E2 may affect melanocyte proliferation, differentiation, and melanogenesis and may increase proliferation and migration of primary retinal pigment epithelial (RPE) cells. Activated by the short chain fatty acids (SCFA), acetate and propionate. In response to SCFA, may positively regulate renin secretion and increase blood pressure. May also be activated by steroid hormones and regulate cell proliferation. Activated by L-lactate in glomus cells. The chain is Olfactory receptor 51E2 (Or51e2) from Rattus norvegicus (Rat).